A 206-amino-acid polypeptide reads, in one-letter code: Outer-membrane lipoprotein carrier protein (206 aa).

A signal peptide spans 1–21; that stretch reads MKKLLCAVLLSPLLYSNAVLA.

It belongs to the LolA family. As to quaternary structure, monomer.

Its subcellular location is the periplasm. Participates in the translocation of lipoproteins from the inner membrane to the outer membrane. Only forms a complex with a lipoprotein if the residue after the N-terminal Cys is not an aspartate (The Asp acts as a targeting signal to indicate that the lipoprotein should stay in the inner membrane). The sequence is that of Outer-membrane lipoprotein carrier protein from Shewanella sp. (strain MR-4).